Reading from the N-terminus, the 268-residue chain is Imidazole glycerol phosphate synthase subunit HisF (268 aa).

Active-site residues include aspartate 12 and aspartate 131.

It belongs to the HisA/HisF family. As to quaternary structure, heterodimer of HisH and HisF.

Its subcellular location is the cytoplasm. The catalysed reaction is 5-[(5-phospho-1-deoxy-D-ribulos-1-ylimino)methylamino]-1-(5-phospho-beta-D-ribosyl)imidazole-4-carboxamide + L-glutamine = D-erythro-1-(imidazol-4-yl)glycerol 3-phosphate + 5-amino-1-(5-phospho-beta-D-ribosyl)imidazole-4-carboxamide + L-glutamate + H(+). The protein operates within amino-acid biosynthesis; L-histidine biosynthesis; L-histidine from 5-phospho-alpha-D-ribose 1-diphosphate: step 5/9. Functionally, IGPS catalyzes the conversion of PRFAR and glutamine to IGP, AICAR and glutamate. The HisF subunit catalyzes the cyclization activity that produces IGP and AICAR from PRFAR using the ammonia provided by the HisH subunit. The sequence is that of Imidazole glycerol phosphate synthase subunit HisF from Methanosphaerula palustris (strain ATCC BAA-1556 / DSM 19958 / E1-9c).